A 301-amino-acid polypeptide reads, in one-letter code: Syntaxin-17 (301 aa).

Residue Ser-2 is modified to N-acetylserine. At 2 to 227 (SEDEEKVKLR…KNLQKAAKYK (226 aa)) the chain is on the cytoplasmic side. Lys-41 bears the N6-acetyllysine mark. Positions 49–128 (DKLHEEHINA…QVNDEELLQP (80 aa)) form a coiled coil. Phosphotyrosine; by ABL1 is present on Tyr-156. The t-SNARE coiled-coil homology domain occupies 161–223 (IPQDQNAAES…EEGTKNLQKA (63 aa)). Residues 228-248 (LAALPVAGALIGGVVGGPIGL) traverse the membrane as a helical segment. The necessary and sufficient for localization to autophagosome stretch occupies residues 228–274 (LAALPVAGALIGGVVGGPIGLLAGFKVAGIAAALGGGVLGFTGGKLI). Over 249–253 (LAGFK) the chain is Lumenal. A helical membrane pass occupies residues 254 to 274 (VAGIAAALGGGVLGFTGGKLI). The Cytoplasmic segment spans residues 275 to 301 (QRRKQKMMEKLTSSCPDLPSQSDKKRS). Ser-288 carries the phosphoserine modification. The short motif at 298-301 (KKRS) is the Endoplasmic reticulum retention signal element.

This sequence belongs to the syntaxin family. Forms a SNARE complex composed of VAMP8, SNAP29 and STX17 involved in fusion of autophagosome with lysosome. May interact with VTI1B. Probably interacts with BET1, SCFD1 and SEC22B. Interacts with PTPN2 and ABL1; involved in STX17 phosphorylation. Interacts with COPB1. Interacts with TMED9 and TMED10; the interaction is direct. Interacts with VAMP7. Interacts with RUBCNL/PACER; promoting targeting of RUBCNL/PACER to autophagosome. Interacts with VAMP8, SNAP29, VPS39 and VPS41; these interactions are increased in the absence of TMEM39A. Interacts with IRGM; promoting STX17 recruitment to autophagosomes. Interacts with ATG8 proteins GABARAP and MAP1LC3B. Interacts with RNF115; this interaction enhances STX17 stability which in turn promotes autophagosome maturation. Interacts with RAB39A (GTP-bound); the interaction promotes autophagosome-lysosome membrane fusion driven by STX17-SNAP29-VAMP8. Interacts with RAB39B; the interaction may promote a different fonction in autophagy as compared with RAB39A. Dephosphorylation by PTPN2; regulates exit from the endoplasmic reticulum. Phosphorylated at Tyr-156 probably by ABL1.

The protein resides in the endoplasmic reticulum membrane. The protein localises to the smooth endoplasmic reticulum membrane. It is found in the endoplasmic reticulum-Golgi intermediate compartment membrane. It localises to the cytoplasmic vesicle. Its subcellular location is the autophagosome membrane. The protein resides in the COPII-coated vesicle membrane. The protein localises to the cytoplasm. It is found in the cytosol. It localises to the mitochondrion membrane. Its subcellular location is the autolysosome membrane. Its function is as follows. SNAREs, soluble N-ethylmaleimide-sensitive factor-attachment protein receptors, are essential proteins for fusion of cellular membranes. SNAREs localized on opposing membranes assemble to form a trans-SNARE complex, an extended, parallel four alpha-helical bundle that drives membrane fusion. STX17 is a SNARE of the autophagosome involved in autophagy through the direct control of autophagosome membrane fusion with the lysosome membrane. May also play a role in the early secretory pathway where it may maintain the architecture of the endoplasmic reticulum-Golgi intermediate compartment/ERGIC and Golgi and/or regulate transport between the endoplasmic reticulum, the ERGIC and the Golgi. In Mus musculus (Mouse), this protein is Syntaxin-17.